The chain runs to 465 residues: Na(+)-translocating NADH-quinone reductase subunit A (465 aa).

It belongs to the NqrA family. Composed of six subunits; NqrA, NqrB, NqrC, NqrD, NqrE and NqrF.

The enzyme catalyses a ubiquinone + n Na(+)(in) + NADH + H(+) = a ubiquinol + n Na(+)(out) + NAD(+). Its function is as follows. NQR complex catalyzes the reduction of ubiquinone-1 to ubiquinol by two successive reactions, coupled with the transport of Na(+) ions from the cytoplasm to the periplasm. NqrA to NqrE are probably involved in the second step, the conversion of ubisemiquinone to ubiquinol. In Chlamydia trachomatis serovar A (strain ATCC VR-571B / DSM 19440 / HAR-13), this protein is Na(+)-translocating NADH-quinone reductase subunit A.